A 229-amino-acid polypeptide reads, in one-letter code: Large ribosomal subunit protein uL1 (229 aa).

This sequence belongs to the universal ribosomal protein uL1 family. As to quaternary structure, part of the 50S ribosomal subunit.

Its function is as follows. Binds directly to 23S rRNA. The L1 stalk is quite mobile in the ribosome, and is involved in E site tRNA release. In terms of biological role, protein L1 is also a translational repressor protein, it controls the translation of the L11 operon by binding to its mRNA. The polypeptide is Large ribosomal subunit protein uL1 (Actinobacillus pleuropneumoniae serotype 5b (strain L20)).